Reading from the N-terminus, the 64-residue chain is Bowman-Birk type trypsin inhibitor TI1 (64 aa).

Cystine bridges form between cysteine 9-cysteine 61, cysteine 10-cysteine 25, cysteine 15-cysteine 23, cysteine 32-cysteine 39, and cysteine 36-cysteine 49.

It belongs to the Bowman-Birk serine protease inhibitor family.

This Coix lacryma-jobi (Job's tears) protein is Bowman-Birk type trypsin inhibitor TI1.